The following is a 218-amino-acid chain: Ribonuclease HII (218 aa).

In terms of domain architecture, RNase H type-2 spans 24 to 218; that stretch reads ESIAGVDEVG…KLFAVNGSLT (195 aa). Positions 30, 31, and 126 each coordinate a divalent metal cation.

This sequence belongs to the RNase HII family. Mn(2+) serves as cofactor. It depends on Mg(2+) as a cofactor.

It is found in the cytoplasm. The enzyme catalyses Endonucleolytic cleavage to 5'-phosphomonoester.. Its function is as follows. Endonuclease that specifically degrades the RNA of RNA-DNA hybrids. The protein is Ribonuclease HII of Prochlorococcus marinus (strain MIT 9313).